The following is a 214-amino-acid chain: C-type lectin domain family 4 member E (214 aa).

At Met-1 to Val-22 the chain is on the cytoplasmic side. Residues Leu-23–Val-45 traverse the membrane as a helical; Signal-anchor for type II membrane protein segment. Topologically, residues Thr-46–Asp-214 are extracellular. Cys-80 and Cys-91 form a disulfide bridge. Positions Tyr-87–Glu-206 constitute a C-type lectin domain. N-linked (GlcNAc...) asparagine glycosylation is present at Asn-107. 2 disulfide bridges follow: Cys-108–Cys-205 and Cys-179–Cys-197. The Ca(2+) site is built by Val-117, Glu-123, Glu-169, Asn-171, Asn-193, Asp-194, and Glu-206. The short motif at Glu-169–Asn-171 is the Confers specificity for glucose/mannose-type carbohydrates element.

Monomer and homodimer. Interacts with signaling adapter Fc receptor gamma chain/FCER1G to form a functional complex; the interaction is direct. Alternatively, acts as a bridge for interaction between CLEC4D and FCER1G. A heterodimer of CLEC4E and CLEC4D associates with FCER1G to form a functional complex. Interacts with SAP130 nuclear protein that is released from necrotic cells; the interaction is direct. Highly expressed in macrophages in response to stimulation with bacterial glycolipids and pro-inflammatory cytokines. Expressed in dendritic cells (at protein level) in response to stimulation with mycobacterial trehalose 6,6'-dimycolate (TDM).

The protein resides in the cell membrane. It is found in the cell projection. The protein localises to the phagocytic cup. Functionally, calcium-dependent lectin that acts as a pattern recognition receptor (PRR) of the innate immune system: recognizes damage-associated molecular patterns (DAMPs) of abnormal self and pathogen-associated molecular patterns (PAMPs) of bacteria and fungi. The PAMPs notably include mycobacterial trehalose 6,6'-dimycolate (TDM), a cell wall glycolipid with potent adjuvant immunomodulatory functions. Interacts with signaling adapter Fc receptor gamma chain/FCER1G to form a functional complex in myeloid cells. Binding of mycobacterial trehalose 6,6'-dimycolate (TDM) to this receptor complex leads to phosphorylation of the immunoreceptor tyrosine-based activation motif (ITAM) of FCER1G, triggering activation of SYK, CARD9 and NF-kappa-B, consequently driving maturation of antigen-presenting cells and shaping antigen-specific priming of T-cells toward effector T-helper 1 (Th1) and T-helper 17 (Th17) cell subtypes. Also recognizes alpha-mannose residues on pathogenic fungi of the genus Malassezia and mediates macrophage activation. Through recognition of DAMPs released upon nonhomeostatic cell death, enables immune sensing of damaged self and promotes inflammatory cell infiltration into the damaged tissue. This chain is C-type lectin domain family 4 member E, found in Mus musculus (Mouse).